We begin with the raw amino-acid sequence, 114 residues long: Probable 4-amino-4-deoxy-L-arabinose-phosphoundecaprenol flippase subunit ArnE (114 aa).

Transmembrane regions (helical) follow at residues 41–61 (GWLW…LLVL) and 68–88 (VAYP…HFVF). Residues 43 to 112 (LWLALFSLGL…VIGGVLLLSR (70 aa)) form the EamA domain.

This sequence belongs to the ArnE family. As to quaternary structure, heterodimer of ArnE and ArnF.

It is found in the cell inner membrane. It participates in bacterial outer membrane biogenesis; lipopolysaccharide biosynthesis. Its function is as follows. Translocates 4-amino-4-deoxy-L-arabinose-phosphoundecaprenol (alpha-L-Ara4N-phosphoundecaprenol) from the cytoplasmic to the periplasmic side of the inner membrane. This is Probable 4-amino-4-deoxy-L-arabinose-phosphoundecaprenol flippase subunit ArnE from Pseudomonas fluorescens (strain ATCC BAA-477 / NRRL B-23932 / Pf-5).